A 234-amino-acid chain; its full sequence is CHD1 helical C-terminal domain containing protein 1 (234 aa).

The tract at residues 1–38 (MEASDGQADEREEPLEQGTNARSLERRSSTTPAKDSLV) is disordered. The CHD1 helical C-terminal domain (CHCT) stretch occupies residues 44–145 (LDRDTFKICK…NNQTTKFLMA (102 aa)). The tract at residues 200–234 (LRARGPRRRGSKLPQEPKLKRRRIKEAPDTPETCL) is disordered.

The protein localises to the cytoplasm. It is found in the nucleus. Functionally, may play a role in regulation of apoptosis. In Bos taurus (Bovine), this protein is CHD1 helical C-terminal domain containing protein 1 (CHCT1).